The chain runs to 430 residues: Adenylosuccinate synthetase (430 aa).

Residues 12 to 18 and 40 to 42 contribute to the GTP site; these read GDEGKGK and GHT. Asp13 acts as the Proton acceptor in catalysis. Mg(2+) is bound by residues Asp13 and Gly40. IMP is bound by residues 13–16, 38–41, Thr130, Arg144, Gln224, Thr239, and Arg303; these read DEGK and NAGH. His41 acts as the Proton donor in catalysis. Substrate is bound at residue 299-305; that stretch reads VNTGRKR. GTP is bound by residues Arg305, 331 to 333, and 413 to 415; these read KLD and STS.

This sequence belongs to the adenylosuccinate synthetase family. As to quaternary structure, homodimer. Mg(2+) serves as cofactor.

It is found in the cytoplasm. It catalyses the reaction IMP + L-aspartate + GTP = N(6)-(1,2-dicarboxyethyl)-AMP + GDP + phosphate + 2 H(+). It functions in the pathway purine metabolism; AMP biosynthesis via de novo pathway; AMP from IMP: step 1/2. Functionally, plays an important role in the de novo pathway of purine nucleotide biosynthesis. Catalyzes the first committed step in the biosynthesis of AMP from IMP. The sequence is that of Adenylosuccinate synthetase from Rhodopseudomonas palustris (strain BisB18).